A 283-amino-acid polypeptide reads, in one-letter code: Pantothenate synthetase (283 aa).

30-37 lines the ATP pocket; it reads MGYYHAGH. Residue histidine 37 is the Proton donor of the active site. A (R)-pantoate-binding site is contributed by glutamine 61. Glutamine 61 provides a ligand contact to beta-alanine. 147-150 contributes to the ATP binding site; the sequence is GQKD. Glutamine 153 serves as a coordination point for (R)-pantoate. Residues valine 176 and 184-187 each bind ATP; that span reads MSSR.

The protein belongs to the pantothenate synthetase family. Homodimer.

The protein localises to the cytoplasm. The catalysed reaction is (R)-pantoate + beta-alanine + ATP = (R)-pantothenate + AMP + diphosphate + H(+). Its pathway is cofactor biosynthesis; (R)-pantothenate biosynthesis; (R)-pantothenate from (R)-pantoate and beta-alanine: step 1/1. Functionally, catalyzes the condensation of pantoate with beta-alanine in an ATP-dependent reaction via a pantoyl-adenylate intermediate. The sequence is that of Pantothenate synthetase from Nitratidesulfovibrio vulgaris (strain ATCC 29579 / DSM 644 / CCUG 34227 / NCIMB 8303 / VKM B-1760 / Hildenborough) (Desulfovibrio vulgaris).